Here is a 205-residue protein sequence, read N- to C-terminus: Delta-aminolevulinic acid dehydratase (205 aa).

Residues Cys-117, Cys-119, and Cys-127 each coordinate Zn(2+). The Schiff-base intermediate with substrate role is filled by Lys-192. Arg-202 lines the substrate pocket.

This sequence belongs to the ALAD family. In terms of assembly, homooctamer. Requires Zn(2+) as cofactor.

The catalysed reaction is 2 5-aminolevulinate = porphobilinogen + 2 H2O + H(+). The protein operates within porphyrin-containing compound metabolism; protoporphyrin-IX biosynthesis; coproporphyrinogen-III from 5-aminolevulinate: step 1/4. Its function is as follows. Catalyzes an early step in the biosynthesis of tetrapyrroles. Binds two molecules of 5-aminolevulinate per subunit, each at a distinct site, and catalyzes their condensation to form porphobilinogen. The protein is Delta-aminolevulinic acid dehydratase (hemB) of Ruminiclostridium josui (Clostridium josui).